A 23-amino-acid chain; its full sequence is Apolipophorin-1 (23 aa).

A compositionally biased stretch (basic and acidic residues) spans 1–15 (SVKSEVDNFDKHLKA). Residues 1–23 (SVKSEVDNFDKHLKAESAPFNNE) are disordered.

In terms of tissue distribution, expressed in hemolymph.

It localises to the secreted. Its function is as follows. Constitutes the major component of lipophorin, which mediates transport for various types of lipids in hemolymph. Acts by forming lipoprotein particles that bind lipoproteins and lipids. This Galleria mellonella (Greater wax moth) protein is Apolipophorin-1.